The sequence spans 112 residues: Large ribosomal subunit protein P1 (112 aa).

Positions 80–112 (AAAAPAAESKKEEKKKEEESDQSDDDMGFGLFD) are disordered. The segment covering 87-97 (ESKKEEKKKEE) has biased composition (basic and acidic residues). Phosphoserine is present on residues Ser-99 and Ser-102.

Belongs to the eukaryotic ribosomal protein P1/P2 family. As to quaternary structure, P1 and P2 exist as dimers at the large ribosomal subunit.

Its function is as follows. Plays an important role in the elongation step of protein synthesis. The polypeptide is Large ribosomal subunit protein P1 (RpLP1) (Drosophila melanogaster (Fruit fly)).